The sequence spans 420 residues: MNIFNNNLHETDKEINEIIKHEKLRQSSVIELIASENFVSPAVLEAQGALLTNKYAEGYPSKRFYNGCEEVDKAENLAIERVKKLFNCKYANVQPHSGSQANQAVYLALLQPGDTVLGMSLDSGGHLTHGAAPNMSGKWFNAVSYSVNKETYLIDYDEIERLADLHKPKLLIAGFSAYPRNIDFAKFREIVDKVGAYFMADIAHIAGLVATGEHQSPIPYAHAVTSTTHKTLRGPRGGLILSNDEEIGHKINSALFPGLQGGPLMHIIAAKAVAFLENLQPEYKSYIQQVISNAKALASSLQERGYDILTGGTDNHIVLVDLRKDGITGKLAANSLDRAGITCNKNAIPFDETSPFITSGIRLGTPACTTRGFKEKDFVLVGHMVADILDGLKNNEDNSALEQQVLNEVTKLIELFPFYG.

(6S)-5,6,7,8-tetrahydrofolate is bound by residues L121 and 125-127 (GHL). An N6-(pyridoxal phosphate)lysine modification is found at K230. (6S)-5,6,7,8-tetrahydrofolate contacts are provided by residues E246 and 354-356 (SPF).

Belongs to the SHMT family. In terms of assembly, homodimer. Pyridoxal 5'-phosphate serves as cofactor.

Its subcellular location is the cytoplasm. It carries out the reaction (6R)-5,10-methylene-5,6,7,8-tetrahydrofolate + glycine + H2O = (6S)-5,6,7,8-tetrahydrofolate + L-serine. It functions in the pathway one-carbon metabolism; tetrahydrofolate interconversion. Its pathway is amino-acid biosynthesis; glycine biosynthesis; glycine from L-serine: step 1/1. Functionally, catalyzes the reversible interconversion of serine and glycine with tetrahydrofolate (THF) serving as the one-carbon carrier. This reaction serves as the major source of one-carbon groups required for the biosynthesis of purines, thymidylate, methionine, and other important biomolecules. Also exhibits THF-independent aldolase activity toward beta-hydroxyamino acids, producing glycine and aldehydes, via a retro-aldol mechanism. This is Serine hydroxymethyltransferase from Rickettsia rickettsii (strain Iowa).